The following is a 106-amino-acid chain: Cell division protein FtsB (106 aa).

Topologically, residues 1–3 (MGK) are cytoplasmic. A helical membrane pass occupies residues 4-21 (LTLLLLALLGWLQYSLWL). Residues 22–106 (GKNGVHDYVR…ASSSQNNLQK (85 aa)) are Periplasmic-facing. Residues 40-62 (QGSNAKLKARNDQLFAEIDDLNG) adopt a coiled-coil conformation.

This sequence belongs to the FtsB family. Part of a complex composed of FtsB, FtsL and FtsQ.

Its subcellular location is the cell inner membrane. Its function is as follows. Essential cell division protein. May link together the upstream cell division proteins, which are predominantly cytoplasmic, with the downstream cell division proteins, which are predominantly periplasmic. In Serratia proteamaculans (strain 568), this protein is Cell division protein FtsB.